We begin with the raw amino-acid sequence, 212 residues long: MKEYKILLVDDHEIIINGIMNALLPWPHFKIVEHVKNGLEVYNACCAYEPDILILDLSLPGINGLDIIPQLHQRWPAMNILVYTAYQQEYMTIKTLAAGANGYVLKSSSQQVLLAALQTVAVNKRYIDPTLNREAILAELNADTTNHQLLTLRERQVLKLIDEGYTNHGISEKLHISIKTVETHRMNMMRKLQVHKVTELLNCARRMRLIEY.

Positions 1-138 (MKEYKILLVD…PTLNREAILA (138 aa)) are required for prevention of DNA binding in absence of phosphorylation and for full stimulation of activity by acidic pH. Residues 5 to 121 (KILLVDDHEI…VLLAALQTVA (117 aa)) enclose the Response regulatory domain. 4-aspartylphosphate is present on Asp-56. The HTH luxR-type domain maps to 143 to 208 (DTTNHQLLTL…ELLNCARRMR (66 aa)). The H-T-H motif DNA-binding region spans 167–186 (NHGISEKLHISIKTVETHRM). At Cys-203 the chain carries S-nitrosocysteine.

As to quaternary structure, homodimer; disulfide-linked; dimerizes upon DNA-binding. In terms of processing, ssrB phosphorylated on Asp-56 activates the expression of virulence genes whereas the unphosphorylated form controls biofilm formation. Independently of SsrA, can be phosphorylated by small inorganic phosphate donors (such as acetyl phosphate or phosphoramidate). Post-translationally, disulfide bond formation at Cys-203 is not required for dimerization. Cys-203 may serve as a redox sensor that is nitrosylated in presence of reactive nitrogen species (RNS) generated by the host, the modification modulates its DNA-binding activity. Cys-203 is relatively resistant to oxidation by hydrogen peroxide.

It localises to the cytoplasm. Its function is as follows. Member of the two-component regulatory system SsrA/SsrB (SpiR/SsrB) that is required for intracellular proliferation and systemic dissemination within the host. When inside acidic Salmonella-containing vesicles (SCV) within host cells the SsrA sensor kinase autophosphorylates and the phosphoryl group is transferred to the response regulator SsrB; phosphorylated SsrB activates the expression of genes encoding virulence proteins, including pathogenicity island 2 (SPI2) and other horizontally acquired genes, but also ancestral genes; it can stimulate gene expression both by recruiting RNA polymerase and by antagonizing the action of the transcriptional repressor hns (H-NS). Can also act independently of sensor kinase ssrA to support the dormant carrier state by directing the transcription of factors required for biofilm formation. DNA-binding is stimulated by acidic pH conditions, and binding promotes bending of DNA both upstream and downstream of binding sites. Binds a degenerate 18-basepair palindromic sequence with a 7-4-7 internal organization, and regulates gene expression from 86 operons. When phosphorylated, activates the transcription of the ABC transporter complex dalSTUV, which helps protect the organism from oxidative killing by host neutrophils. Binds the phoP promoter to stimulate expression in acidic pH conditions. Antagonizes hns to activate the transcription of ugtL. Following invasion of host cells, binds the hilD and hilA regulatory regions to repress their transcription and consequently to repress transcription of pathogenicity island 1 (SPI1) encoding genes involved in host cell invasion. Binds the promoters of the flagellar master regulators flhD and flhC to repress their expression and consequently to suppress flagellar motility and promote evasion of the host inflammasome during infection of host cells. Activates expression of sseI/srfH, sifA, sifB, sseJ and regulates its own expression. When unphosphorylated, relieves the hns-mediated repression of master biofilm regulator csgD by binding and bending the csgD regulatory region. May act as early as in the lumen of the host small intestine, to activate the expression of virulence proteins prior to invasion of host cells. The protein is Response regulator SsrB of Salmonella typhimurium (strain LT2 / SGSC1412 / ATCC 700720).